Consider the following 90-residue polypeptide: MEYSYPLNPDWTTEEMTIVVQFLEAIERAYEKGIDTQELKDKYRAFKHVVPAKGEEKRIGIDFEKASGYSAYKVMQLVKNATTSKIKMQP.

This sequence belongs to the UPF0223 family.

In Listeria monocytogenes serotype 4a (strain HCC23), this protein is UPF0223 protein LMHCC_1569.